The chain runs to 358 residues: NADH-quinone oxidoreductase subunit H (358 aa).

A run of 8 helical transmembrane segments spans residues 30-50, 96-116, 129-149, 165-185, 201-221, 264-284, 297-317, and 336-356; these read IVIG…MIFM, FLYN…FSCL, VGIF…LLAG, GAQM…IVIL, GWFL…YLIA, LFII…PLHI, IPGF…LMWI, and YLVP…VFKL.

It belongs to the complex I subunit 1 family. NDH-1 is composed of 14 different subunits. Subunits NuoA, H, J, K, L, M, N constitute the membrane sector of the complex.

It localises to the cell inner membrane. It catalyses the reaction a quinone + NADH + 5 H(+)(in) = a quinol + NAD(+) + 4 H(+)(out). NDH-1 shuttles electrons from NADH, via FMN and iron-sulfur (Fe-S) centers, to quinones in the respiratory chain. The immediate electron acceptor for the enzyme in this species is believed to be ubiquinone. Couples the redox reaction to proton translocation (for every two electrons transferred, four hydrogen ions are translocated across the cytoplasmic membrane), and thus conserves the redox energy in a proton gradient. This subunit may bind ubiquinone. The chain is NADH-quinone oxidoreductase subunit H from Phocaeicola vulgatus (strain ATCC 8482 / DSM 1447 / JCM 5826 / CCUG 4940 / NBRC 14291 / NCTC 11154) (Bacteroides vulgatus).